We begin with the raw amino-acid sequence, 105 residues long: Fungal protease inhibitor-1 (105 aa).

The first 19 residues, 1–19 (MKAVITLLFLACILVVTYG), serve as a signal peptide directing secretion. Intrachain disulfides connect cysteine 23-cysteine 56, cysteine 28-cysteine 58, cysteine 33-cysteine 59, cysteine 42-cysteine 62, cysteine 72-cysteine 93, and cysteine 87-cysteine 98.

Inhibits proteases from the fungi A.oryzae and R.oryzae, trypsin and chymotrypsin. Does not inhibit protease from the bacterium B.licheniformis or papain. The chain is Fungal protease inhibitor-1 from Antheraea mylitta (Tasar silkworm).